The sequence spans 260 residues: Acetylglutamate kinase (260 aa).

Substrate-binding positions include 46–47 (GG), Arg68, and Asn160.

It belongs to the acetylglutamate kinase family. ArgB subfamily.

The protein resides in the cytoplasm. It catalyses the reaction N-acetyl-L-glutamate + ATP = N-acetyl-L-glutamyl 5-phosphate + ADP. It functions in the pathway amino-acid biosynthesis; L-arginine biosynthesis; N(2)-acetyl-L-ornithine from L-glutamate: step 2/4. Its function is as follows. Catalyzes the ATP-dependent phosphorylation of N-acetyl-L-glutamate. The sequence is that of Acetylglutamate kinase from Shewanella putrefaciens (strain CN-32 / ATCC BAA-453).